The following is a 394-amino-acid chain: Ribulose bisphosphate carboxylase large chain (394 aa).

The residue at position 5 (K5) is an N6,N6,N6-trimethyllysine. The substrate site is built by N114 and T164. The active-site Proton acceptor is the K166. K168 provides a ligand contact to substrate. 3 residues coordinate Mg(2+): K192, D194, and E195. K192 carries the post-translational modification N6-carboxylysine. The Proton acceptor role is filled by H285. R286, H318, and S370 together coordinate substrate.

It belongs to the RuBisCO large chain family. Type I subfamily. Heterohexadecamer of 8 large chains and 8 small chains. Mg(2+) is required as a cofactor.

Its subcellular location is the plastid. The protein localises to the chloroplast. The catalysed reaction is 2 (2R)-3-phosphoglycerate + 2 H(+) = D-ribulose 1,5-bisphosphate + CO2 + H2O. The enzyme catalyses D-ribulose 1,5-bisphosphate + O2 = 2-phosphoglycolate + (2R)-3-phosphoglycerate + 2 H(+). In terms of biological role, ruBisCO catalyzes two reactions: the carboxylation of D-ribulose 1,5-bisphosphate, the primary event in carbon dioxide fixation, as well as the oxidative fragmentation of the pentose substrate in the photorespiration process. Both reactions occur simultaneously and in competition at the same active site. The sequence is that of Ribulose bisphosphate carboxylase large chain (rbcL) from Barclaya longifolia (Orchid lily).